Here is a 361-residue protein sequence, read N- to C-terminus: Large-conductance mechanosensitive channel MscMJLR (361 aa).

A run of 5 helical transmembrane segments spans residues 20-40, 65-85, 89-109, 137-157, and 177-197; these read ILSLISIILFIVIGKYANALI, LPVAIAIILSGFYFGVNFLYL, LKTAVNEGILTAFILCVVVFF, IVVLTKKLVRLVVWVVGLLLI, and LAVALASQNLVSNLIAGLIIL.

It belongs to the MscS (TC 1.A.23) family.

It localises to the cell membrane. Functionally, large-conductance mechanosensitive channel that opens in response to stretch forces in the membrane lipid bilayer. Selective for cations. Rectifies with voltage. The sequence is that of Large-conductance mechanosensitive channel MscMJLR from Methanocaldococcus jannaschii (strain ATCC 43067 / DSM 2661 / JAL-1 / JCM 10045 / NBRC 100440) (Methanococcus jannaschii).